Here is a 3303-residue protein sequence, read N- to C-terminus: Protein unc-80 homolog (3303 aa).

The segment covering 1-37 (MVTNAAGTAATGGATSNTTNNNNLQTNNNSHGANNNN) has biased composition (low complexity). The segment at 1-43 (MVTNAAGTAATGGATSNTTNNNNLQTNNNSHGANNNNDDFDFD) is disordered. A helical membrane pass occupies residues 202–222 (LFSVPTITLFVYLFAPIIHHL). 7 disordered regions span residues 284–316 (LSAD…VSSP), 361–422 (LQQQ…SESI), 491–512 (LYQG…KDYI), 526–546 (AEEP…KKKR), 1036–1067 (FRRR…SERN), 1443–1563 (LHEP…DDTA), and 1627–1671 (VEPT…KDRI). Positions 361–377 (LQQQQSQSRRGSRQSMN) are enriched in low complexity. Composition is skewed to basic and acidic residues over residues 378–391 (SRDK…KFEF) and 401–422 (SMKE…SESI). Residues 495 to 505 (PGSNSRDSPGS) are compositionally biased toward polar residues. The span at 1058-1067 (SDSTSSSERN) shows a compositional bias: polar residues. Positions 1490 to 1499 (FKRRSLKLRR) are enriched in basic residues. Residues 1546–1556 (DDQQPESPTDS) are compositionally biased toward polar residues. Over residues 1660 to 1671 (KRKDSLSRKDRI) the composition is skewed to basic and acidic residues. 3 helical membrane-spanning segments follow: residues 1969-1989 (VYEI…ALFL), 2018-2038 (LPQQ…MFYV), and 2048-2068 (LVGS…GIMF). Disordered stretches follow at residues 2518–2550 (NGPY…FEEE), 3003–3158 (EEKR…FKAQ), and 3170–3262 (FRHS…YRDN). Over residues 3003 to 3018 (EEKRYDRESSEQKKSD) the composition is skewed to basic and acidic residues. Polar residues-rich tracts occupy residues 3033 to 3053 (QRPS…SHSH) and 3071 to 3106 (PSDT…SQSG). Residues 3124–3134 (SGHGSGGGIGT) show a composition bias toward gly residues. Residues 3135 to 3152 (GAASAVPSHLSHSQSLQQ) are compositionally biased toward low complexity. Residues 3198 to 3217 (SRLQRSKAASRKTFRLKRSR) are compositionally biased toward basic residues. Over residues 3226-3239 (IVTSQEEQAPQAQA) the composition is skewed to polar residues. Residues 3246 to 3257 (SWDSVSQTSSTS) are compositionally biased toward low complexity.

This sequence belongs to the unc-80 family. As to quaternary structure, interacts with unc79 and na. Can interact with unc79 independently of na.

The protein resides in the membrane. Its function is as follows. Component of the na (narrow abdomen) sodium channel complex. In the circadian clock neurons it functions with na and unc79 to promote circadian rhythmicity. In Drosophila melanogaster (Fruit fly), this protein is Protein unc-80 homolog.